Consider the following 86-residue polypeptide: Sugar transporter SemiSWEET (86 aa).

The next 3 membrane-spanning stretches (helical) occupy residues 3–23 (PFLI…AYAP), 37–57 (ISLG…IYGL), and 61–81 (DAPL…ILVM). Positions 6 to 63 (IKLIGFAAATCTTVAYAPQFIKVLKTRSARDISLGMFLVMVLGLALWLIYGLLSGDAP) constitute a PQ-loop domain.

As to quaternary structure, homodimer. Homooligomer.

The protein resides in the cell membrane. Mediates sucrose transmembrane transport down a concentration gradient. The sequence is that of Sugar transporter SemiSWEET from Bradyrhizobium diazoefficiens (strain JCM 10833 / BCRC 13528 / IAM 13628 / NBRC 14792 / USDA 110).